Reading from the N-terminus, the 332-residue chain is Decaprenyl-phosphate phosphoribosyltransferase (332 aa).

Residues 1–12 show a composition bias toward basic and acidic residues; sequence MSEHAAEHHRDT. Residues 1-36 form a disordered region; the sequence is MSEHAAEHHRDTQNFLTSEPHTTAIEDNKKRQPPKN. Transmembrane regions (helical) follow at residues 50–70 and 74–94; these read WVKN…AIFN and IIDV…IYLV. 2 residues coordinate 5-phospho-alpha-D-ribose 1-diphosphate: Lys52 and Tyr92. Asn95 and Asp99 together coordinate Mg(2+). Lys109 provides a ligand contact to 5-phospho-alpha-D-ribose 1-diphosphate. 2 helical membrane-spanning segments follow: residues 114 to 134 and 146 to 166; these read IAAG…LIAL and VALA…CFGW. 2 residues coordinate 5-phospho-alpha-D-ribose 1-diphosphate: Lys167 and Arg184. 2 helical membrane-spanning segments follow: residues 169 to 189 and 190 to 210; these read MPVI…MAGG and VAAG…GSLF. Lys215 contacts trans,octa-cis-decaprenyl phosphate. 3 helical membrane-spanning segments follow: residues 244–264, 273–293, and 310–330; these read FVWT…GFDL, PWYQ…AAGV, and VLQV…YIMP.

The protein belongs to the UbiA prenyltransferase family. DPPR synthase subfamily. Requires Mg(2+) as cofactor.

The protein resides in the cell inner membrane. It catalyses the reaction trans,octa-cis-decaprenyl phosphate + 5-phospho-alpha-D-ribose 1-diphosphate + H(+) = trans,octa-cis-decaprenylphospho-beta-D-ribofuranose 5-phosphate + diphosphate. The protein operates within cell wall biogenesis; cell wall polysaccharide biosynthesis. Its function is as follows. Involved in the biosynthesis of decaprenylphosphoryl arabinose (DPA) a precursor for arabinan synthesis in mycobacterial cell wall biosynthesis. Catalyzes the transfer of a 5-phosphoribosyl residue from phosphoribose diphosphate (PRPP) to decaprenyl phosphate (DP) to form decaprenylphosphoryl-5-phosphoribose (DPPR). This chain is Decaprenyl-phosphate phosphoribosyltransferase, found in Corynebacterium glutamicum (strain ATCC 13032 / DSM 20300 / JCM 1318 / BCRC 11384 / CCUG 27702 / LMG 3730 / NBRC 12168 / NCIMB 10025 / NRRL B-2784 / 534).